Reading from the N-terminus, the 211-residue chain is Endo-1,4-beta-xylanase 5 (211 aa).

The signal sequence occupies residues Met-1–Ala-16. The region spanning Ala-19 to Ser-210 is the GH11 domain. Glu-106 acts as the Nucleophile in catalysis. The active-site Proton donor is Glu-197.

This sequence belongs to the glycosyl hydrolase 11 (cellulase G) family.

Its subcellular location is the secreted. It carries out the reaction Endohydrolysis of (1-&gt;4)-beta-D-xylosidic linkages in xylans.. Its pathway is glycan degradation; xylan degradation. Its function is as follows. Endo-1,4-beta-xylanase involved in the hydrolysis of xylan, a major structural heterogeneous polysaccharide found in plant biomass representing the second most abundant polysaccharide in the biosphere, after cellulose. This is Endo-1,4-beta-xylanase 5 (XYN5) from Aspergillus niger.